Consider the following 305-residue polypeptide: Glycine--tRNA ligase alpha subunit (305 aa).

The protein belongs to the class-II aminoacyl-tRNA synthetase family. In terms of assembly, tetramer of two alpha and two beta subunits.

The protein resides in the cytoplasm. The catalysed reaction is tRNA(Gly) + glycine + ATP = glycyl-tRNA(Gly) + AMP + diphosphate. In Heliobacterium modesticaldum (strain ATCC 51547 / Ice1), this protein is Glycine--tRNA ligase alpha subunit.